A 317-amino-acid polypeptide reads, in one-letter code: DNA-directed RNA polymerase subunit alpha 2 (317 aa).

Residues Met1–Glu227 form an alpha N-terminal domain (alpha-NTD) region. Residues Ile241 to Leu317 are alpha C-terminal domain (alpha-CTD).

This sequence belongs to the RNA polymerase alpha chain family. In terms of assembly, homodimer. The RNAP catalytic core consists of 2 alpha, 1 beta, 1 beta' and 1 omega subunit. When a sigma factor is associated with the core the holoenzyme is formed, which can initiate transcription.

It carries out the reaction RNA(n) + a ribonucleoside 5'-triphosphate = RNA(n+1) + diphosphate. Functionally, DNA-dependent RNA polymerase catalyzes the transcription of DNA into RNA using the four ribonucleoside triphosphates as substrates. The chain is DNA-directed RNA polymerase subunit alpha 2 from Francisella tularensis subsp. holarctica (strain LVS).